A 181-amino-acid chain; its full sequence is ADP-ribosylation factor 1 (181 aa).

Gly-2 carries the N-myristoyl glycine lipid modification. The important for the stable binding to the membranes stretch occupies residues Leu-3–Lys-16. GTP contacts are provided by residues Ala-27 to Thr-32, Asn-126 to Asp-129, and Ala-160.

Belongs to the small GTPase superfamily. Arf family. As to quaternary structure, may interact with GTPase RAB5b.

The protein localises to the golgi apparatus membrane. The enzyme catalyses GTP + H2O = GDP + phosphate + H(+). With respect to regulation, alternates between an inactive GDP-bound form and an active GTP-bound form. Intrinsic GTPase activity is almost undetectable in vitro. Activated by a guanine nucleotide-exchange factor (GEF) and inactivated by GTPase-activating protein ARFGAP1. Its function is as follows. Small GTPase involved in protein trafficking between different compartments. Modulates vesicle budding and uncoating within the Golgi complex. In its GTP-bound form, triggers the recruitment of coatomer proteins to the Golgi membrane. The hydrolysis of ARF1-bound GTP, which is mediated by ARFGAPs proteins, is required for dissociation of coat proteins from Golgi membranes and vesicles. Regulates the transport of N-acylated AK2 to the parasitophorous vacuole membrane. May be involved in the activation of lipid kinase PIP5K. This is ADP-ribosylation factor 1 from Plasmodium falciparum (isolate 3D7).